Consider the following 700-residue polypeptide: Elongation factor G (700 aa).

The 283-residue stretch at 8 to 290 folds into the tr-type G domain; sequence ERYRNIGISA…AVIDYLPSPV (283 aa). GTP is bound by residues 17-24, 88-92, and 142-145; these read AHIDAGKT, DTPGH, and NKMD.

This sequence belongs to the TRAFAC class translation factor GTPase superfamily. Classic translation factor GTPase family. EF-G/EF-2 subfamily.

Its subcellular location is the cytoplasm. Functionally, catalyzes the GTP-dependent ribosomal translocation step during translation elongation. During this step, the ribosome changes from the pre-translocational (PRE) to the post-translocational (POST) state as the newly formed A-site-bound peptidyl-tRNA and P-site-bound deacylated tRNA move to the P and E sites, respectively. Catalyzes the coordinated movement of the two tRNA molecules, the mRNA and conformational changes in the ribosome. This Leptothrix cholodnii (strain ATCC 51168 / LMG 8142 / SP-6) (Leptothrix discophora (strain SP-6)) protein is Elongation factor G.